The chain runs to 482 residues: Falcipain-2b (482 aa).

Topologically, residues 1–35 (MDYHMDYIPNEVISHQGERFVDKYVDRKILKNKKS) are cytoplasmic. A propeptide spans 1-241 (MDYHMDYIPN…PLKNSKYLLD (241 aa)) (activation peptide). The Bipartite vacuolar targeting signal 1 motif lies at 16 to 25 (QGERFVDKYV). The helical; Signal-anchor for type II membrane protein transmembrane segment at 36 to 56 (LLVIISLSVLSVVGFILFYFT) threads the bilayer. Residues 57 to 482 (PNFRKSDLFK…GTDAFIPLIE (426 aa)) are Lumenal-facing. Asparagine 67 carries N-linked (GlcNAc...) asparagine glycosylation. Positions 84–105 (KSPNGKKFIVSKIDEALSFYDN) match the Bipartite vacuolar targeting signal 2 motif. Asparagine 117 carries an N-linked (GlcNAc...) asparagine glycan. A Nose motif; required for the correct folding of the mature form motif is present at residues 242–258 (QINYDAVIKKYKGNENF). 4 cysteine pairs are disulfide-bonded: cysteine 280–cysteine 321, cysteine 314–cysteine 355, cysteine 340–cysteine 360, and cysteine 409–cysteine 470. Cysteine 283 is an active-site residue. Histidine 415 is an active-site residue. Positions 426–435 (EIVNPLTKKG) match the Arm motif; binds to host hemoglobin and required for the inhibitory interaction between the propeptide and the catalytic domain motif.

This sequence belongs to the peptidase C1 family. Component of the hemozoin formation complex (HFC) composed of falcipains FP2A and/or FP2B, plasmepsins PMII, PMIII/HAP and PMIV, heme detoxifying protein HDP and falcilysin FLN. The HFC complex is involved in hemoglobin degradation and detoxification of heme in the food vacuole during the asexual blood stage.

It is found in the vacuole. Its subcellular location is the membrane. Functionally, cysteine protease which cleaves native host hemoglobin in the food vacuole during the asexual blood stage. Preferentially cleaves substrates which have a leucine at the P2 position. The chain is Falcipain-2b from Plasmodium falciparum (isolate 3D7).